Reading from the N-terminus, the 59-residue chain is Protein HOR7 (59 aa).

An N-terminal signal peptide occupies residues 1-19 (MKLSQVVVSAVAFTGLVSA).

The protein to yeast DDR2.

This Saccharomyces cerevisiae (strain ATCC 204508 / S288c) (Baker's yeast) protein is Protein HOR7 (HOR7).